Reading from the N-terminus, the 735-residue chain is Coiled-coil quantitatively-enriched protein 1 (735 aa).

A coiled-coil region spans residues Ala514–Leu719.

Interacts (during meiosis) with pcp1. Interacts with clr3, pot1, taz1 and tpz1.

Its subcellular location is the nucleus. The protein localises to the nucleoplasm. It localises to the chromosome. The protein resides in the telomere. Functionally, component of the meiotic bouquet that facilitates meiotic nuclear reorganization of the telomeres to the centrosome. Links telomeres to the meiotic centrosome component pcp1. Essential for the formation of normal telomere clusters during meiotic prophase. Required for telomere length regulation and chromosome segregation. Required for proper positioning of nucleosomes at heterochromatic loci and for transcriptional gene silencing (TGS) function of the Snf2/Hdac-containing repressor complex (SHREC). This is Coiled-coil quantitatively-enriched protein 1 (ccq1) from Schizosaccharomyces pombe (strain 972 / ATCC 24843) (Fission yeast).